Consider the following 353-residue polypeptide: Neutral protease 2 homolog AO090001000135 (353 aa).

The N-terminal stretch at 1–19 is a signal peptide; the sequence is MRFISVSSLLLALAPALNA. Residues 20 to 176 constitute a propeptide that is removed on maturation; the sequence is VPVEVAGSAQ…TQAVKILERR (157 aa). Intrachain disulfides connect C182-C254 and C261-C279. H304 contributes to the Zn(2+) binding site. E305 is an active-site residue. Residues H308 and D319 each contribute to the Zn(2+) site.

Belongs to the peptidase M35 family. Requires Zn(2+) as cofactor.

The protein resides in the secreted. The catalysed reaction is Preferential cleavage of bonds with hydrophobic residues in P1'. Also 3-Asn-|-Gln-4 and 8-Gly-|-Ser-9 bonds in insulin B chain.. Secreted metalloproteinase that allows assimilation of proteinaceous substrates. Shows high activities on basic nuclear substrates such as histone and protamine. The sequence is that of Neutral protease 2 homolog AO090001000135 from Aspergillus oryzae (strain ATCC 42149 / RIB 40) (Yellow koji mold).